The sequence spans 202 residues: MKALTARQQEVFDLIRDHISQTGMPPTRAEIAQRLGFRSPNAAEEHLKALARKGVLEIVSGASRGIRLLVEEETGIPLIGRVAAGEPLLAQQHIEGHYQVDPGMFKPSADFLLRVSGMSMKDIGILDGDLLAVHKTQDVRNGQVVVARIDDEVTVKRLKKQGNTVQLLPENSEFSPIVVDLREQTFSIEGLAVGVIRNGEWL.

Residues 28-48 (RAEIAQRLGFRSPNAAEEHLK) constitute a DNA-binding region (H-T-H motif). Catalysis depends on for autocatalytic cleavage activity residues serine 119 and lysine 156.

Belongs to the peptidase S24 family. As to quaternary structure, homodimer.

It catalyses the reaction Hydrolysis of Ala-|-Gly bond in repressor LexA.. In terms of biological role, represses a number of genes involved in the response to DNA damage (SOS response), including recA and lexA. Binds to the 16 bp palindromic sequence 5'-CTGTATATATATACAG-3'. In the presence of single-stranded DNA, RecA interacts with LexA causing an autocatalytic cleavage which disrupts the DNA-binding part of LexA, leading to derepression of the SOS regulon and eventually DNA repair. The polypeptide is LexA repressor (Enterobacter sp. (strain 638)).